The sequence spans 277 residues: 2-dehydro-3-deoxyphosphooctonate aldolase (277 aa).

Belongs to the KdsA family.

It localises to the cytoplasm. The enzyme catalyses D-arabinose 5-phosphate + phosphoenolpyruvate + H2O = 3-deoxy-alpha-D-manno-2-octulosonate-8-phosphate + phosphate. It participates in carbohydrate biosynthesis; 3-deoxy-D-manno-octulosonate biosynthesis; 3-deoxy-D-manno-octulosonate from D-ribulose 5-phosphate: step 2/3. The protein operates within bacterial outer membrane biogenesis; lipopolysaccharide biosynthesis. This chain is 2-dehydro-3-deoxyphosphooctonate aldolase, found in Brucella abortus (strain S19).